We begin with the raw amino-acid sequence, 212 residues long: Uracil-DNA glycosylase (212 aa).

Catalysis depends on Asp59, which acts as the Proton acceptor.

The protein belongs to the uracil-DNA glycosylase (UDG) superfamily. UNG family.

It is found in the cytoplasm. The catalysed reaction is Hydrolyzes single-stranded DNA or mismatched double-stranded DNA and polynucleotides, releasing free uracil.. Excises uracil residues from the DNA which can arise as a result of misincorporation of dUMP residues by DNA polymerase or due to deamination of cytosine. The protein is Uracil-DNA glycosylase of Ureaplasma urealyticum serovar 10 (strain ATCC 33699 / Western).